Reading from the N-terminus, the 826-residue chain is MTAFTQIEKSAAVPAPTDFGIEGMTCASCVRRVEKAISAVPGVASATVNLATERASVQFTGAPDTGGVLLAIEKAGYEPKVIIQEFGIEGMTCASCVSRVEKALRTVPGVADASVNLATEKGTVRFVSGVDVAAIEAAVRDAGYDVRKAKASGATAEPEDRRELETRTLKRLVILSAVLTLPLFLVEMGSHFMPGVHEWIMENIGMRHNLYIQFALATAVLFGPGLRFFRKGVPNLLRWTPDMNSLVVLGTTAAWGYSVVATFASGLLPSGTANVYYEAAAVIVTLILLGRYLEARAKGRTSQAIKRLLGLQPKTAFVAHGDEFVEIQISDVVVGDVIRIRPGEKIPVDGTVLDGNSYVDESMITGEPVPVQKAAGAEVVGGTINKNGSFTFRATKVGGDTLLAQIIKMVETAQGSKLPIQALVDKVTAWFVPAVILVAVLTFAAWYVFGPSPALTFALVNAVAVLIIACPCAMGLATPTSIMVGTGRAAELGILFRKGEALQSLREADVIALDKTGTLTKGRPELTDIVPADGFEADEVLSFVASLEALSEHPIAEAIVSAAKSRGIALVPATDFEATPGFGVRGAVSGLPVQVGADRAFSGVGIDVSPFVVEAERLGNSGKSPLYAAIDGRLAAIIAVSDPIKDTTPQAIKALHDLGLKVAMITGDNRRTADAIARQLGIDEVVAEVLPDGKVDAVKRLREGGRKVAFIGDGINDAPALTEADVGIAVGTGTDIAIESADVVLMSGDLIGVPKAIALSKATIRNIKQNLFWAFAYNVSLVPVAAGVLYPLNGTLLSPILAAAAMAMSSVFVLGNALRLRSVNPA.

2 consecutive HMA domains span residues Ala15 to Lys80 and Ile82 to Arg147. Positions 26, 29, 93, and 96 each coordinate Cu cation. Helical transmembrane passes span Leu172–Phe192, Asn209–Phe229, Leu246–Gly266, Ser270–Gly290, Ala429–Phe449, and Phe457–Ala477. Residue Asp514 is the 4-aspartylphosphate intermediate of the active site. Mg(2+) is bound by residues Asp713 and Asp717. The next 2 helical transmembrane spans lie at Phe772 to Leu792 and Thr795 to Gly815.

Belongs to the cation transport ATPase (P-type) (TC 3.A.3) family. Type IB subfamily.

It localises to the cell membrane. The catalysed reaction is Cu(2+)(in) + ATP + H2O = Cu(2+)(out) + ADP + phosphate + H(+). Involved in copper transport. The protein is Copper-transporting ATPase 1 (actP1) of Rhizobium meliloti (strain 1021) (Ensifer meliloti).